Here is a 505-residue protein sequence, read N- to C-terminus: Phosphomevalonate kinase, peroxisomal (505 aa).

At Ala2 the chain carries N-acetylalanine. Positions 57-65 (DVKLTSPQL) match the Peroxisomal targeting signal PTS2 motif. 177–187 (VAKTGLGSSAA) is an ATP binding site.

Belongs to the GHMP kinase family. Mevalonate kinase subfamily.

Its subcellular location is the peroxisome. The enzyme catalyses (R)-5-phosphomevalonate + ATP = (R)-5-diphosphomevalonate + ADP. The protein operates within isoprenoid biosynthesis; isopentenyl diphosphate biosynthesis via mevalonate pathway; isopentenyl diphosphate from (R)-mevalonate: step 2/3. This Arabidopsis thaliana (Mouse-ear cress) protein is Phosphomevalonate kinase, peroxisomal.